A 379-amino-acid chain; its full sequence is Glucose-1-phosphate adenylyltransferase (379 aa).

Alpha-D-glucose 1-phosphate-binding positions include Gly-164, 179 to 180 (EK), and Ser-190.

This sequence belongs to the bacterial/plant glucose-1-phosphate adenylyltransferase family. In terms of assembly, homotetramer.

It carries out the reaction alpha-D-glucose 1-phosphate + ATP + H(+) = ADP-alpha-D-glucose + diphosphate. The protein operates within glycan biosynthesis; glycogen biosynthesis. In terms of biological role, involved in the biosynthesis of ADP-glucose, a building block required for the elongation reactions to produce glycogen. Catalyzes the reaction between ATP and alpha-D-glucose 1-phosphate (G1P) to produce pyrophosphate and ADP-Glc. The polypeptide is Glucose-1-phosphate adenylyltransferase (Streptococcus equi subsp. zooepidemicus (strain H70)).